The primary structure comprises 294 residues: UPF0761 membrane protein YPTB0027 (294 aa).

A run of 7 helical transmembrane segments spans residues 44–64, 67–87, 108–128, 136–156, 185–205, 212–232, and 246–266; these read LLSL…FPMF, ISIK…GDII, GLIV…NIIW, LVFS…LVGA, VFPL…VPTV, ALIG…GFAM, and VLAV…IVLL.

The protein belongs to the UPF0761 family.

It is found in the cell inner membrane. This Yersinia pseudotuberculosis serotype I (strain IP32953) protein is UPF0761 membrane protein YPTB0027.